Reading from the N-terminus, the 104-residue chain is Large ribosomal subunit protein uL24 (104 aa).

Belongs to the universal ribosomal protein uL24 family. In terms of assembly, part of the 50S ribosomal subunit.

Functionally, one of two assembly initiator proteins, it binds directly to the 5'-end of the 23S rRNA, where it nucleates assembly of the 50S subunit. In terms of biological role, one of the proteins that surrounds the polypeptide exit tunnel on the outside of the subunit. The polypeptide is Large ribosomal subunit protein uL24 (Shewanella pealeana (strain ATCC 700345 / ANG-SQ1)).